Here is a 371-residue protein sequence, read N- to C-terminus: MRKTLFSGVALAAVIAFGGSAWADVLVGIGIPVTGPNAVYGAQIQKGAEAAIKEVNDAGGINGEKIAITIGDDVSDPKQGISVANKFAADGVKFVIGHFNSGVTIPASQVYAENGILEISPGATNPQYTEQGLWNTFRTCGRDDQQGTVAGQYIFDHFKDAKIAVIHDKTPYGQGLADETKKKLNELGTKETLYEGVNVGEKDFSALIAKLKQAGVNVVYWGGMHPEAGLLIRQMADQGLKAQFISGDGIVSNELASIAGDAVAGVMNTFGPDPRDDKANAELIKAFRDKGFEPEAYTLYSYAAVQSLAQAAKAAGSNDPQEVAKAMKEKGPFKTVLGDLSYDEKGDPKLPGYVMYKWEKGADGKYNYIQQ.

A signal peptide spans 1-23 (MRKTLFSGVALAAVIAFGGSAWA).

The protein belongs to the leucine-binding protein family.

In terms of biological role, component of an amino-acid transport system. The sequence is that of Leu/Ile/Val-binding protein homolog 1 from Brucella abortus (strain 2308).